Consider the following 288-residue polypeptide: Ankyrin repeat and SOCS box protein 8 (288 aa).

Position 17 is a phosphoserine (serine 17). ANK repeat units lie at residues 52–81 (GTLK…EVNA), 85–113 (YNRT…NPNA), 117–146 (NRDT…SVNA), and 150–179 (NNDT…EVRV). The SOCS box domain maps to 235–288 (QLCEKLTVLCSAPGTLKTLARYAVRRSLGLQYLPDAVKGLPLPASLKEYLLLLE).

It belongs to the ankyrin SOCS box (ASB) family. In terms of assembly, interacts with TBK1; this interaction promotes TBK1 proteasomal degradation. In terms of processing, phosphorylated by TBK1. In terms of tissue distribution, highest level of expression in skeletal muscle. Also expressed in heart, brain, placenta, liver, kidney and pancreas.

Its subcellular location is the cytoplasm. It functions in the pathway protein modification; protein ubiquitination. In terms of biological role, may be a substrate-recognition component of a SCF-like ECS (Elongin-Cullin-SOCS-box protein) E3 ubiquitin-protein ligase complex which mediates the ubiquitination and subsequent proteasomal degradation of target proteins. Inhibits IFN-beta production through the IRF3 signaling pathway by targeting TBK1 via 'Lys-48'-linked ubiquitination, leading to its proteasomal degradation. This Homo sapiens (Human) protein is Ankyrin repeat and SOCS box protein 8 (ASB8).